A 92-amino-acid polypeptide reads, in one-letter code: Small ribosomal subunit protein uS19c (92 aa).

This sequence belongs to the universal ribosomal protein uS19 family.

It is found in the plastid. The protein localises to the chloroplast. Functionally, protein S19 forms a complex with S13 that binds strongly to the 16S ribosomal RNA. This chain is Small ribosomal subunit protein uS19c, found in Ostreococcus tauri.